We begin with the raw amino-acid sequence, 356 residues long: Neutral protease 2 homolog MEP5 (356 aa).

An N-terminal signal peptide occupies residues 1 to 19 (MRVSSSLIALAALAVQALA). A propeptide spanning residues 20 to 179 (LPVNELAERD…ASAIPELDKR (160 aa)) is cleaved from the precursor. Intrachain disulfides connect Cys187-Cys259 and Cys266-Cys284. His308 provides a ligand contact to Zn(2+). Glu309 is a catalytic residue. 2 residues coordinate Zn(2+): His312 and Asp323.

It belongs to the peptidase M35 family. The cofactor is Zn(2+).

The protein localises to the secreted. It catalyses the reaction Preferential cleavage of bonds with hydrophobic residues in P1'. Also 3-Asn-|-Gln-4 and 8-Gly-|-Ser-9 bonds in insulin B chain.. Secreted metalloproteinase that allows assimilation of proteinaceous substrates. Shows high activities on basic nuclear substrates such as histone and protamine. May be involved in virulence. The protein is Neutral protease 2 homolog MEP5 (MEP5) of Coccidioides posadasii (strain C735) (Valley fever fungus).